The primary structure comprises 287 residues: Glutamate racemase (287 aa).

Substrate contacts are provided by residues D32–S33 and Y64–G65. Residue C96 is the Proton donor/acceptor of the active site. N97–T98 is a substrate binding site. The active-site Proton donor/acceptor is C208. T209–H210 is a substrate binding site.

Belongs to the aspartate/glutamate racemases family.

The enzyme catalyses L-glutamate = D-glutamate. It functions in the pathway cell wall biogenesis; peptidoglycan biosynthesis. Provides the (R)-glutamate required for cell wall biosynthesis. In Photorhabdus laumondii subsp. laumondii (strain DSM 15139 / CIP 105565 / TT01) (Photorhabdus luminescens subsp. laumondii), this protein is Glutamate racemase.